Here is a 402-residue protein sequence, read N- to C-terminus: Phosphoglycerate kinase (402 aa).

Substrate is bound by residues 21–23, Arg-36, 59–62, Arg-114, and Arg-147; these read DLN and HLGR. Residues Lys-202, Glu-329, and 355–358 contribute to the ATP site; that span reads GGDT.

The protein belongs to the phosphoglycerate kinase family. In terms of assembly, monomer.

Its subcellular location is the cytoplasm. It catalyses the reaction (2R)-3-phosphoglycerate + ATP = (2R)-3-phospho-glyceroyl phosphate + ADP. The protein operates within carbohydrate degradation; glycolysis; pyruvate from D-glyceraldehyde 3-phosphate: step 2/5. In Psychrobacter sp. (strain PRwf-1), this protein is Phosphoglycerate kinase.